The sequence spans 487 residues: Gasdermin-D (487 aa).

Y38 is subject to Phosphotyrosine. S-(2-succinyl)cysteine occurs at positions 39, 57, and 77. 2 beta stranded membrane passes run 92–98 and 104–109; these read QGRVMLS and KISGGA. The residue at position 122 (C122) is an S-(2-succinyl)cysteine. A run of 2 beta stranded transmembrane segments spans residues 181 to 187 and 192 to 198; these read GSGQFTL and CLKGEGK. S-(2-succinyl)cysteine occurs at positions 192 and 265. C192 is lipidated: S-palmitoyl cysteine. The linker helix loop stretch occupies residues 278 to 298; it reads IDEEELIEAADFQGLYAEVKA. C299, C434, and C487 each carry S-(2-succinyl)cysteine.

Belongs to the gasdermin family. In terms of assembly, homooligomer; homooligomeric ring-shaped pore complex containing 27-28 subunits when inserted in the membrane. Homooligomerization is promoted by the mTORC1 complex in macrophages. In response to a canonical inflammasome stimulus, such as nigericin, recruited to NLRP3 inflammasone with similar kinetics to that of uncleaved CASP1 precursor. Although this recruitment is also observed in the absence of PYCARD, it is more efficient in its presence. Post-translationally, cleavage at Asp-276 by CASP1 (mature and uncleaved precursor forms), CASP4/CASP11 or CASP8 relieves autoinhibition and is sufficient to initiate pyroptosis. Cleavage by CASP1 and CASP4/CASP11 is not strictly dependent on the consensus cleavage site on GSDMD but depends on an exosite interface on CASP1 that recognizes and binds the Gasdermin-D, C-terminal (GSDMD-CT) part. Cleavage by CASP8 takes place following inactivation of MAP3K7/TAK1 by Yersinia toxin YopJ. Cleavage at Asp-88 by CASP3 or CASP7 inactivates the ability to mediate pyroptosis, but generates the Gasdermin-D, p13 chain, which translocates to the nucleus and acts as a transcription regulator. Cleavage by papain allergen generates the Gasdermin-D, p40 chain. In terms of processing, palmitoylated at Cys-192 by ZDHHC5 and ZDHHC9 in response to microbial infection and danger signals. May also be palmitoylated by ZDHHC7. Palmitoylation takes place before cleavage by caspases (CASP1, CASP4, CASP5 or CASP8) and is required for membrane translocation and pore formation. Depalmitoylated by LYPLA2. Succination of Cys-192 by the Krebs cycle intermediate fumarate, which leads to S-(2-succinyl)cysteine residues, inhibits processing by caspases, and ability to initiate pyroptosis. Succination modification is catalyzed by a non-enzymatic reaction caused by an accumulation of fumarate. Post-translationally, glycosylated: O-GlcNAcylation by OGT leads to reduced cleavage by CASP4 and decreased LPS-induced endothelial cell pyroptosis. In terms of tissue distribution, highly expressed in brain endothelial cells.

It localises to the cytoplasm. The protein resides in the cytosol. Its subcellular location is the inflammasome. The protein localises to the cell membrane. It is found in the secreted. It localises to the mitochondrion membrane. The protein resides in the nucleus. The full-length protein before cleavage is inactive: intramolecular interactions between N- and C-terminal domains mediate autoinhibition in the absence of activation signal. The intrinsic pyroptosis-inducing activity is carried by the released N-terminal moiety (Gasdermin-D, N-terminal) following cleavage by inflammatory caspases CASP1, CASP4/CASP11 or CASP8. Cleavage at Asp-88 by CASP3 or CASP7 inactivates the ability to mediate pyroptosis. Pore formation is specifically inhibited by VHH(GSDMD-1) nanobody, protecting against excessive pyroptosis. Inhibited by small molecule NU6300, which covalently reacts with Cys-191, thereby preventing palmitoylation and pyroptosis. Precursor of a pore-forming protein that plays a key role in host defense against pathogen infection and danger signals. This form constitutes the precursor of the pore-forming protein: upon cleavage, the released N-terminal moiety (Gasdermin-D, N-terminal) binds to membranes and forms pores, triggering pyroptosis. Functionally, promotes pyroptosis in response to microbial infection and danger signals. Produced by the cleavage of gasdermin-D by inflammatory caspases CASP1 or CASP4/CASP11 in response to canonical, as well as non-canonical (such as cytosolic LPS) inflammasome activators. After cleavage, moves to the plasma membrane where it strongly binds to inner leaflet lipids, including monophosphorylated phosphatidylinositols, such as phosphatidylinositol 4-phosphate, bisphosphorylated phosphatidylinositols, such as phosphatidylinositol (4,5)-bisphosphate, as well as phosphatidylinositol (3,4,5)-bisphosphate, and more weakly to phosphatidic acid and phosphatidylserine. Homooligomerizes within the membrane and forms pores of 10-15 nanometers (nm) of inner diameter, allowing the release of mature interleukin-1 (IL1B and IL18) and triggering pyroptosis. Gasdermin pores also allow the release of mature caspase-7 (CASP7). In some, but not all, cells types, pyroptosis is followed by pyroptotic cell death, which is caused by downstream activation of ninjurin-1 (NINJ1), which mediates membrane rupture (cytolysis). Also forms pores in the mitochondrial membrane, resulting in release of mitochondrial DNA (mtDNA) into the cytosol. Gasdermin-D, N-terminal released from pyroptotic cells into the extracellular milieu rapidly binds to and kills both Gram-negative and Gram-positive bacteria, without harming neighboring mammalian cells, as it does not disrupt the plasma membrane from the outside due to lipid-binding specificity. Under cell culture conditions, also active against intracellular bacteria, such as Listeria monocytogenes. Also active in response to MAP3K7/TAK1 inactivation by Yersinia toxin YopJ, which triggers cleavage by CASP8 and subsequent activation. Required for mucosal tissue defense against enteric pathogens. Activation of the non-canonical inflammasome in brain endothelial cells can lead to excessive pyroptosis, leading to blood-brain barrier breakdown. Strongly binds to bacterial and mitochondrial lipids, including cardiolipin. Does not bind to unphosphorylated phosphatidylinositol, phosphatidylethanolamine nor phosphatidylcholine. In terms of biological role, transcription coactivator produced by the cleavage by CASP3 or CASP7 in the upper small intestine in response to dietary antigens. Required to maintain food tolerance in small intestine: translocates to the nucleus and acts as a coactivator for STAT1 to induce the transcription of CIITA and MHC class II molecules, which in turn induce type 1 regulatory T (Tr1) cells in upper small intestine. Its function is as follows. Produced by the cleavage by papain allergen. After cleavage, moves to the plasma membrane and homooligomerizes within the membrane and forms pores of 10-15 nanometers (nm) of inner diameter, allowing the specific release of mature interleukin-33 (IL33), promoting type 2 inflammatory immune response. The chain is Gasdermin-D from Mus musculus (Mouse).